The primary structure comprises 129 residues: MKTVQFCFLFCCWKAICCNSCELTNITIAIEKEECRFCISINTTWCAGYCYTRDLVYKDPARPNIQKTCTFKEVVYETVRVPGCAHHADSLYTYPVATQCHCGKCDSDSTDCTVRGLGPSYCSFSEMKE.

A signal peptide spans 1–18 (MKTVQFCFLFCCWKAICC). Intrachain disulfides connect Cys21/Cys69, Cys35/Cys84, Cys38/Cys122, Cys46/Cys100, Cys50/Cys102, and Cys105/Cys112. 2 N-linked (GlcNAc...) asparagine glycosylation sites follow: Asn25 and Asn42.

This sequence belongs to the glycoprotein hormones subunit beta family. Heterodimer. The active follitropin is a heterodimer composed of an alpha chain/CGA shared with other hormones and a unique beta chain/FSHB shown here.

Its subcellular location is the secreted. In terms of biological role, together with the alpha chain CGA constitutes follitropin, the follicle-stimulating hormone, and provides its biological specificity to the hormone heterodimer. Binds FSHR, a G protein-coupled receptor, on target cells to activate downstream signaling pathways. Follitropin is involved in follicle development and spermatogenesis in reproductive organs. This chain is Follitropin subunit beta (FSHB), found in Macaca fascicularis (Crab-eating macaque).